The sequence spans 294 residues: 4-hydroxy-tetrahydrodipicolinate synthase (294 aa).

Thr47 is a binding site for pyruvate. Residue Tyr136 is the Proton donor/acceptor of the active site. Lys164 serves as the catalytic Schiff-base intermediate with substrate. Val206 is a binding site for pyruvate.

It belongs to the DapA family. In terms of assembly, homotetramer; dimer of dimers.

The protein localises to the cytoplasm. The enzyme catalyses L-aspartate 4-semialdehyde + pyruvate = (2S,4S)-4-hydroxy-2,3,4,5-tetrahydrodipicolinate + H2O + H(+). It functions in the pathway amino-acid biosynthesis; L-lysine biosynthesis via DAP pathway; (S)-tetrahydrodipicolinate from L-aspartate: step 3/4. In terms of biological role, catalyzes the condensation of (S)-aspartate-beta-semialdehyde [(S)-ASA] and pyruvate to 4-hydroxy-tetrahydrodipicolinate (HTPA). This Acaryochloris marina (strain MBIC 11017) protein is 4-hydroxy-tetrahydrodipicolinate synthase.